We begin with the raw amino-acid sequence, 373 residues long: Chaperone protein DnaJ (373 aa).

The J domain maps to 5–70; it reads DYYEVLGVNR…QKRAAYDQYG (66 aa). Residues 133–211 form a CR-type zinc finger; sequence GTETKIRIPV…CHGGGRVKQH (79 aa). Zn(2+)-binding residues include Cys-146, Cys-149, Cys-163, Cys-166, Cys-185, Cys-188, Cys-199, and Cys-202. 4 CXXCXGXG motif repeats span residues 146-153, 163-170, 185-192, and 199-206; these read CETCHGSG, CSTCGGHG, CPKCHGSG, and CPTCHGGG. The segment at 346 to 373 is disordered; sequence LEDINQQDSGKHSPREKSWMTKVKDFFQ. Residues 354–373 show a composition bias toward basic and acidic residues; that stretch reads SGKHSPREKSWMTKVKDFFQ.

Belongs to the DnaJ family. Homodimer. Zn(2+) is required as a cofactor.

The protein resides in the cytoplasm. Functionally, participates actively in the response to hyperosmotic and heat shock by preventing the aggregation of stress-denatured proteins and by disaggregating proteins, also in an autonomous, DnaK-independent fashion. Unfolded proteins bind initially to DnaJ; upon interaction with the DnaJ-bound protein, DnaK hydrolyzes its bound ATP, resulting in the formation of a stable complex. GrpE releases ADP from DnaK; ATP binding to DnaK triggers the release of the substrate protein, thus completing the reaction cycle. Several rounds of ATP-dependent interactions between DnaJ, DnaK and GrpE are required for fully efficient folding. Also involved, together with DnaK and GrpE, in the DNA replication of plasmids through activation of initiation proteins. This chain is Chaperone protein DnaJ, found in Methylobacillus flagellatus (strain ATCC 51484 / DSM 6875 / VKM B-1610 / KT).